The chain runs to 293 residues: Pantothenate synthetase (293 aa).

38 to 45 contacts ATP; that stretch reads MGALHEGH. Histidine 45 (proton donor) is an active-site residue. Glutamine 69 serves as a coordination point for (R)-pantoate. Glutamine 69 lines the beta-alanine pocket. An ATP-binding site is contributed by 155-158; the sequence is GEKD. Glutamine 161 is a binding site for (R)-pantoate. 192–195 is a binding site for ATP; it reads QSSR.

The protein belongs to the pantothenate synthetase family. As to quaternary structure, homodimer.

The protein resides in the cytoplasm. The catalysed reaction is (R)-pantoate + beta-alanine + ATP = (R)-pantothenate + AMP + diphosphate + H(+). The protein operates within cofactor biosynthesis; (R)-pantothenate biosynthesis; (R)-pantothenate from (R)-pantoate and beta-alanine: step 1/1. Functionally, catalyzes the condensation of pantoate with beta-alanine in an ATP-dependent reaction via a pantoyl-adenylate intermediate. The sequence is that of Pantothenate synthetase from Hyphomonas neptunium (strain ATCC 15444).